The chain runs to 228 residues: Triosephosphate isomerase (228 aa).

9-11 (NFK) is a binding site for substrate. Histidine 93 acts as the Electrophile in catalysis. The active-site Proton acceptor is the glutamate 141. Substrate-binding positions include isoleucine 146, glycine 180, and 201–202 (AS).

It belongs to the triosephosphate isomerase family. In terms of assembly, homotetramer; dimer of dimers.

It localises to the cytoplasm. The catalysed reaction is D-glyceraldehyde 3-phosphate = dihydroxyacetone phosphate. It functions in the pathway carbohydrate biosynthesis; gluconeogenesis. The protein operates within carbohydrate degradation; glycolysis; D-glyceraldehyde 3-phosphate from glycerone phosphate: step 1/1. Its function is as follows. Involved in the gluconeogenesis. Catalyzes stereospecifically the conversion of dihydroxyacetone phosphate (DHAP) to D-glyceraldehyde-3-phosphate (G3P). This Metallosphaera sedula (strain ATCC 51363 / DSM 5348 / JCM 9185 / NBRC 15509 / TH2) protein is Triosephosphate isomerase.